The chain runs to 327 residues: GFKFTFFVSIMIYWHVVGEPKEKGQLYNLPAEIPCPTLAPPTPPSHGPAPGNIFFLETSDRTNPNFLFMCSVESAARTHPESHVLVLMKGLPGGNASLPRHLGISLLSCFPNVQMLPLDLRELFRDTPLADWYAAVQGRWEPYLLPVLSDASRIALMWKFGGIYLDTDFIVLKNLRNLTNVLGTQSRYVLNGAFLAFERXHEFMALCMXDFVDHYNGWIWGHQGPQLLTRVFKKWCSIRSLAESRACRGVTTLPPEAFYPIPWQDWKKYFEDINPEELPRLFSATYAVHVWNKKSQGTRFEATSRALLAQLHARYCPTTHEAMKMYL.

The short motif at 166 to 168 (DTD) is the DXD motif element.

Belongs to the glycosyltransferase 32 family.

The protein localises to the golgi apparatus membrane. The enzyme catalyses a beta-D-Gal-(1-&gt;4)-beta-D-Glc-(1&lt;-&gt;1)-Cer(d18:1(4E)) + UDP-alpha-D-galactose = a globoside Gb3Cer (d18:1(4E)) + UDP + H(+). It carries out the reaction a beta-D-Gal-(1&lt;-&gt;1')-ceramide + UDP-alpha-D-galactose = alpha-D-Gal-(1-&gt;4)-beta-D-Gal-(1&lt;-&gt;1')-Cer + UDP + H(+). Its pathway is glycolipid biosynthesis. Its function is as follows. Catalyzes the transfer of galactose from UDP-alpha-D-galactose to lactosylceramide/beta-D-galactosyl-(1-&gt;4)-beta-D-glucosyl-(1&lt;-&gt;1)-ceramide(d18:1(4E)) to produce globotriaosylceramide/globoside Gb3Cer (d18:1(4E)). Also able to transfer galactose to galactosylceramide/beta-D-Gal-(1&lt;-&gt;1')-Cer. Globoside Gb3Cer is a glycosphingolipid of the globo serie, one of the major types of neutral root structures of glycosphingolipids, that constitute a significant portion of mammalian cell membranes. The sequence is that of Lactosylceramide 4-alpha-galactosyltransferase (A4GALT) from Gorilla gorilla gorilla (Western lowland gorilla).